The following is a 155-amino-acid chain: Small ribosomal subunit protein uS7cz/uS7cy (155 aa).

Belongs to the universal ribosomal protein uS7 family. Part of the 30S ribosomal subunit.

The protein resides in the plastid. It is found in the chloroplast. Functionally, one of the primary rRNA binding proteins, it binds directly to 16S rRNA where it nucleates assembly of the head domain of the 30S subunit. This Guizotia abyssinica (Niger) protein is Small ribosomal subunit protein uS7cz/uS7cy (rps7-A).